The chain runs to 33 residues: GIMSIVKDVAKTAAKEAAKGALSTLSCKLAKTC.

An intrachain disulfide couples C27 to C33.

Belongs to the frog skin active peptide (FSAP) family. Brevinin subfamily. As to quaternary structure, monomer. Expressed by the skin glands.

The protein resides in the secreted. Its function is as follows. Has a non-hemolytic activity. Has a broad spectrum of activity against both Gram-positive and Gram-negative bacteria, fungi and protozoa. This Glandirana rugosa (Japanese wrinkled frog) protein is Gaegurin-3 (GGN3).